A 333-amino-acid chain; its full sequence is Leukocyte cell-derived chemotaxin 1 (333 aa).

Residues 42–62 (VGAVVLISGAVLLLFGAIGAF) form a helical membrane-spanning segment. The region spanning 104–201 (GSGAEEAIEV…LCGDLPIFWL (98 aa)) is the BRICHOS domain. Cys-131 and Cys-193 form a disulfide bridge. Residues 211-214 (RERR) constitute a propeptide that is removed on maturation. Positions 212–269 (ERREVVRKTVPTTTKRPHSGPRGNPGPARMRNDSRPSVQEDSEPFNPDNPYHQEGESM) are disordered. Asn-243 carries N-linked (GlcNAc...) asparagine glycosylation. Cystine bridges form between Cys-281/Cys-285, Cys-282/Cys-322, Cys-292/Cys-316, and Cys-296/Cys-312.

This sequence belongs to the chondromodulin-1 family. In terms of processing, after cleavage, the post-translationally modified ChM-I is secreted as a glycoprotein.

The protein resides in the secreted. It localises to the extracellular space. It is found in the extracellular matrix. Its subcellular location is the endomembrane system. Functionally, bifunctional growth regulator that stimulates the growth of cultured chondrocytes in the presence of basic fibroblast growth factor (FGF) but inhibits the growth of cultured vascular endothelial cells. May contribute to the rapid growth of cartilage and vascular invasion prior to the replacement of cartilage by bone during endochondral bone development. Inhibits in vitro tube formation and mobilization of endothelial cells. Plays a role as antiangiogenic factor in cardiac valves to suppress neovascularization. This is Leukocyte cell-derived chemotaxin 1 from Oryctolagus cuniculus (Rabbit).